We begin with the raw amino-acid sequence, 312 residues long: Pyridoxal kinase (312 aa).

M1 carries the post-translational modification N-acetylmethionine. The pyridoxal 5'-phosphate site is built by S12 and T47. Pyridoxamine contacts are provided by S12 and T47. The residue at position 59 (S59) is a Phosphoserine. Position 113 (D113) interacts with K(+). Position 127 (Y127) interacts with pyridoxal 5'-phosphate. T148 contributes to the K(+) binding site. N150 contacts ADP. N150 is a binding site for ATP. Position 164 is a phosphoserine (S164). T186 contacts K(+). ADP is bound at residue 186–187 (TS). 186-187 (TS) provides a ligand contact to ATP. S213 is modified (phosphoserine). Residues 223–226 (MHKV) and 233–234 (TG) each bind ADP. Residues 223 to 226 (MHKV) and 233 to 234 (TG) contribute to the ATP site. 232–235 (GTGD) serves as a coordination point for pyridoxal 5'-phosphate. A pyridoxamine-binding site is contributed by D235. D235 functions as the Proton acceptor in the catalytic mechanism. S285 is modified (phosphoserine).

The protein belongs to the pyridoxine kinase family. Homodimer. Zn(2+) serves as cofactor. Requires Mg(2+) as cofactor. In terms of tissue distribution, ubiquitous.

The protein localises to the cytoplasm. Its subcellular location is the cytosol. The catalysed reaction is pyridoxal + ATP = pyridoxal 5'-phosphate + ADP + H(+). It carries out the reaction pyridoxamine + ATP = pyridoxamine 5'-phosphate + ADP + H(+). It catalyses the reaction pyridoxine + ATP = pyridoxine 5'-phosphate + ADP + H(+). Its pathway is cofactor metabolism; pyridoxal 5'-phosphate salvage; pyridoxal 5'-phosphate from pyridoxal: step 1/1. It functions in the pathway cofactor metabolism; pyridoxal 5'-phosphate salvage; pyridoxine 5'-phosphate from pyridoxine: step 1/1. It participates in cofactor metabolism; pyridoxal 5'-phosphate salvage; pyridoxamine 5'-phosphate from pyridoxamine: step 1/1. Its activity is regulated as follows. Activated by K(+). Activity is increased in the presence of Na(+). Its function is as follows. Catalyzes the phosphorylation of the dietary vitamin B6 vitamers pyridoxal (PL), pyridoxine (PN) and pyridoxamine (PM) to form pyridoxal 5'-phosphate (PLP), pyridoxine 5'-phosphate (PNP) and pyridoxamine 5'-phosphate (PMP), respectively. PLP is the active form of vitamin B6, and acts as a cofactor for over 140 different enzymatic reactions. The sequence is that of Pyridoxal kinase (PDXK) from Ovis aries (Sheep).